The sequence spans 356 residues: sn-glycerol-3-phosphate import ATP-binding protein UgpC (356 aa).

The region spanning leucine 4–isoleucine 235 is the ABC transporter domain. Glycine 37 to serine 44 is an ATP binding site.

This sequence belongs to the ABC transporter superfamily. sn-glycerol-3-phosphate importer (TC 3.A.1.1.3) family. The complex is composed of two ATP-binding proteins (UgpC), two transmembrane proteins (UgpA and UgpE) and a solute-binding protein (UgpB).

The protein resides in the cell inner membrane. The enzyme catalyses sn-glycerol 3-phosphate(out) + ATP + H2O = sn-glycerol 3-phosphate(in) + ADP + phosphate + H(+). Its function is as follows. Part of the ABC transporter complex UgpBAEC involved in sn-glycerol-3-phosphate (G3P) import. Responsible for energy coupling to the transport system. In Escherichia coli O157:H7, this protein is sn-glycerol-3-phosphate import ATP-binding protein UgpC.